A 186-amino-acid chain; its full sequence is Dynactin subunit 3 (186 aa).

Residue A2 is modified to N-acetylalanine. Positions 46–66 form a coiled coil; the sequence is NIASKRERVKILYKKIEDLIK.

This sequence belongs to the dynactin subunit 3 family. Subunit of dynactin, a multiprotein complex part of a tripartite complex with dynein and a adapter, such as BICDL1, BICD2 or HOOK3. The dynactin complex is built around ACTR1A/ACTB filament and consists of an actin-related filament composed of a shoulder domain, a pointed end and a barbed end. Its length is defined by its flexible shoulder domain. The soulder is composed of 2 DCTN1 subunits, 4 DCTN2 and 2 DCTN3. The 4 DCNT2 (via N-terminus) bind the ACTR1A filament and act as molecular rulers to determine the length. The pointed end is important for binding dynein-dynactin cargo adapters. Consists of 4 subunits: ACTR10, DCNT4, DCTN5 and DCTN6. The barbed end is composed of a CAPZA1:CAPZB heterodimers, which binds ACTR1A/ACTB filament and dynactin and stabilizes dynactin.

The protein resides in the cytoplasm. The protein localises to the cytoskeleton. Its subcellular location is the microtubule organizing center. It is found in the centrosome. It localises to the chromosome. The protein resides in the centromere. The protein localises to the kinetochore. Its subcellular location is the spindle. It is found in the cleavage furrow. It localises to the midbody. Functionally, part of the dynactin complex that activates the molecular motor dynein for ultra-processive transport along microtubules. Together with dynein may be involved in spindle assembly and cytokinesis. This Mus musculus (Mouse) protein is Dynactin subunit 3.